Consider the following 569-residue polypeptide: MDIKRTVLWVIFSFSLLMLWDNYNRYTGKPSIFFDSTTTQQAAAPAATGNNAAKTADAPTAATTAATSGANTPGVPDGAAAVKSEVITITTDLMKIGIDTAGGEVRHLELLKHHESGDESKNVVLFDENGQHTYLGQTGLIGGAYPNHKSMFAAVPGPRTLDSANQVQLVLQSEQQGVKLIKTFTFKRGEYKVDIKHDVVNNTSTAITPSLYLQLVHDGSALGGGSMFMASAFTGPAIYTEADKFQKVTFESIEKGKAEHAMKGESGWIALVQHYFVSAFVPPANTPREYFTKKLATNLYAVGTILPMGTVAPGATASMDTTMYSGPQESKRLEAVAPGFELVKDYGWLTIIAKPIFWLMMQIHQILGNWGWTIIVLTIVIKLAFFPLSAAGYRSMAKMKLVTPKMTDIRTRYKGEPQKMNAAMMELYKKEKINPIGGCFPMLVQIPVFISLYWVLLASVEIRNASWLWIHDLAAPDILFGSYHIGTFHLTIGILPILMAISMFIQTKLNPTPPDPIQAKVMMFMPIAFSVMFFFFPAGLVLYWVVNNILSIAQQWFINEKLLGGKAKA.

8 helical membrane passes run 7–24, 219–239, 299–319, 340–360, 366–386, 436–456, 485–505, and 526–546; these read VLWV…DNYN, GSAL…PAIY, LYAV…TASM, FELV…FWLM, ILGN…LAFF, IGGC…YWVL, IGTF…SMFI, and PIAF…YWVV.

It belongs to the OXA1/ALB3/YidC family. Type 1 subfamily. Interacts with the Sec translocase complex via SecD. Specifically interacts with transmembrane segments of nascent integral membrane proteins during membrane integration.

Its subcellular location is the cell inner membrane. Functionally, required for the insertion and/or proper folding and/or complex formation of integral membrane proteins into the membrane. Involved in integration of membrane proteins that insert both dependently and independently of the Sec translocase complex, as well as at least some lipoproteins. Aids folding of multispanning membrane proteins. This is Membrane protein insertase YidC from Herminiimonas arsenicoxydans.